Reading from the N-terminus, the 107-residue chain is Small ribosomal subunit protein uS17 (107 aa).

This sequence belongs to the universal ribosomal protein uS17 family. In terms of assembly, part of the 30S ribosomal subunit.

Functionally, one of the primary rRNA binding proteins, it binds specifically to the 5'-end of 16S ribosomal RNA. This is Small ribosomal subunit protein uS17 from Nitrosopumilus maritimus (strain SCM1).